The following is a 329-amino-acid chain: Ribosomal RNA small subunit methyltransferase H (329 aa).

S-adenosyl-L-methionine contacts are provided by residues 39 to 41, aspartate 57, phenylalanine 84, aspartate 100, and glutamine 107; that span reads GGY. Residues 285 to 305 form a disordered region; the sequence is GPDKDELAQNPRSRSALLRVG.

The protein belongs to the methyltransferase superfamily. RsmH family.

It localises to the cytoplasm. It catalyses the reaction cytidine(1402) in 16S rRNA + S-adenosyl-L-methionine = N(4)-methylcytidine(1402) in 16S rRNA + S-adenosyl-L-homocysteine + H(+). In terms of biological role, specifically methylates the N4 position of cytidine in position 1402 (C1402) of 16S rRNA. This Ruegeria sp. (strain TM1040) (Silicibacter sp.) protein is Ribosomal RNA small subunit methyltransferase H.